The following is a 476-amino-acid chain: Zinc metalloproteinase/disintegrin (476 aa).

An N-terminal signal peptide occupies residues 1–20; it reads MIQVLLVIICLADFPYQGTS. A propeptide spanning residues 21–184 is cleaved from the precursor; it reads IILESGNVND…KSDEPIKASQ (164 aa). At Gln-185 the chain carries Pyrrolidone carboxylic acid. The region spanning 191-387 is the Peptidase M12B domain; that stretch reads RYIELVVVAD…RNPQCILNEP (197 aa). Glu-194 and Asp-278 together coordinate Ca(2+). 3 disulfide bridges follow: Cys-302–Cys-382, Cys-342–Cys-366, and Cys-344–Cys-349. His-327 provides a ligand contact to Zn(2+). The active site involves Glu-328. Positions 331 and 337 each coordinate Zn(2+). The Ca(2+) site is built by Cys-382 and Asn-385. Residues 388–403 constitute a propeptide that is removed on maturation; that stretch reads LRTDTVSTPVSGNELL. Residues 395 to 476 form the Disintegrin domain; the sequence is TPVSGNELLE…AGCPRNGFYG (82 aa). 6 disulfides stabilise this stretch: Cys-409–Cys-424, Cys-411–Cys-419, Cys-418–Cys-441, Cys-432–Cys-438, Cys-437–Cys-462, and Cys-450–Cys-469. The short motif at 454-456 is the Cell attachment site element; the sequence is KGD.

It belongs to the venom metalloproteinase (M12B) family. P-II subfamily. P-IId sub-subfamily. As to quaternary structure, homodimer; disulfide-linked (disintegrin). It depends on Zn(2+) as a cofactor. In terms of tissue distribution, expressed by the venom gland.

It is found in the secreted. The metalloproteinase is inhibited by EDTA, o-phenanthroline, and cysteine. Glutathione does not inhibit the enzymatic activity. Shows weak degradation of alpha-fibrinogen, but has no activity on beta- and gamma-chains. Digests luteinizing hormone-releasing hormone (LH-RH) and oxidized insulin at X-Leu, X-Phe, and X-Val bonds as well as X-His bond. Does not show fibrinogen-clotting activity. Does not show hemorrhagic activity. Functionally, inhibits ADP-induced platelet aggregation. The protein is Zinc metalloproteinase/disintegrin of Gloydius brevicauda (Korean slamosa snake).